We begin with the raw amino-acid sequence, 156 residues long: Small ribosomal subunit protein uS7 (156 aa).

The protein belongs to the universal ribosomal protein uS7 family. Part of the 30S ribosomal subunit. Contacts proteins S9 and S11.

Its function is as follows. One of the primary rRNA binding proteins, it binds directly to 16S rRNA where it nucleates assembly of the head domain of the 30S subunit. Is located at the subunit interface close to the decoding center, probably blocks exit of the E-site tRNA. In Mycolicibacterium gilvum (strain PYR-GCK) (Mycobacterium gilvum (strain PYR-GCK)), this protein is Small ribosomal subunit protein uS7.